We begin with the raw amino-acid sequence, 317 residues long: Beta-ketoacyl-[acyl-carrier-protein] synthase III (317 aa).

Active-site residues include Cys-112 and His-244. Residues 245 to 249 (QANLR) are ACP-binding. Asn-274 is a catalytic residue.

Belongs to the thiolase-like superfamily. FabH family. Homodimer.

Its subcellular location is the cytoplasm. It catalyses the reaction malonyl-[ACP] + acetyl-CoA + H(+) = 3-oxobutanoyl-[ACP] + CO2 + CoA. Its pathway is lipid metabolism; fatty acid biosynthesis. Functionally, catalyzes the condensation reaction of fatty acid synthesis by the addition to an acyl acceptor of two carbons from malonyl-ACP. Catalyzes the first condensation reaction which initiates fatty acid synthesis and may therefore play a role in governing the total rate of fatty acid production. Possesses both acetoacetyl-ACP synthase and acetyl transacylase activities. Its substrate specificity determines the biosynthesis of branched-chain and/or straight-chain of fatty acids. The polypeptide is Beta-ketoacyl-[acyl-carrier-protein] synthase III (Serratia proteamaculans (strain 568)).